Here is a 940-residue protein sequence, read N- to C-terminus: Isoleucine--tRNA ligase (940 aa).

Residues 58 to 68 (PYANGSIHIGH) carry the 'HIGH' region motif. Glu-564 contacts L-isoleucyl-5'-AMP. The 'KMSKS' region signature appears at 605–609 (KMSKS). Lys-608 lines the ATP pocket. Residues Cys-903, Cys-906, Cys-923, and Cys-926 each contribute to the Zn(2+) site.

This sequence belongs to the class-I aminoacyl-tRNA synthetase family. IleS type 1 subfamily. In terms of assembly, monomer. Zn(2+) is required as a cofactor.

It is found in the cytoplasm. It carries out the reaction tRNA(Ile) + L-isoleucine + ATP = L-isoleucyl-tRNA(Ile) + AMP + diphosphate. Functionally, catalyzes the attachment of isoleucine to tRNA(Ile). As IleRS can inadvertently accommodate and process structurally similar amino acids such as valine, to avoid such errors it has two additional distinct tRNA(Ile)-dependent editing activities. One activity is designated as 'pretransfer' editing and involves the hydrolysis of activated Val-AMP. The other activity is designated 'posttransfer' editing and involves deacylation of mischarged Val-tRNA(Ile). This is Isoleucine--tRNA ligase from Shewanella woodyi (strain ATCC 51908 / MS32).